A 332-amino-acid polypeptide reads, in one-letter code: MATLKDQLIVNLLKEEQAPQNKITVVGVGAVGMACAISILMKDLADELALVDVMEDKLKGEMMDLQHGSLFLKTPKIVSSKDYCVTANSKLVIITAGARQQEGESRLNLVQRNVNIFKFIIPNIVKYSPHCKLLIVSNPVDILTYVAWKISGFPKNRVIGSGCNLDSARFRYLMGERLGVHALSCHGWVLGEHGDSSVPVWSGVNVAGVSLKSLNPELGTDADKEQWKEVHKQVVDSAYEVIKLKGYTSWAIGLSVADLAESIMKNLRRVHPISTMIKGLYGINEDVFLSVPCILGQNGISDVVKVTLTPEEEARLKKSADTLWGIQKELQF.

At alanine 2 the chain carries N-acetylalanine. N6-acetyllysine; alternate is present on lysine 5. Residue lysine 5 is modified to N6-succinyllysine; alternate. Lysine 14 is subject to N6-acetyllysine. 29–57 is an NAD(+) binding site; sequence GAVGMACAISILMKDLADELALVDVMEDK. Lysine 57 carries the N6-acetyllysine; alternate modification. Lysine 57 participates in a covalent cross-link: Glycyl lysine isopeptide (Lys-Gly) (interchain with G-Cter in SUMO2); alternate. Lysine 81 carries the N6-acetyllysine modification. Residue arginine 99 coordinates NAD(+). Arginine 106 is a binding site for substrate. An N6-acetyllysine; alternate modification is found at lysine 118. The residue at position 118 (lysine 118) is an N6-succinyllysine; alternate. Residue lysine 126 is modified to N6-acetyllysine. Asparagine 138 is an NAD(+) binding site. Residues asparagine 138 and arginine 169 each coordinate substrate. Histidine 193 acts as the Proton acceptor in catalysis. N6-acetyllysine occurs at positions 224 and 232. Tyrosine 239 is modified (phosphotyrosine). Lysine 243 carries the N6-acetyllysine modification. Threonine 248 contributes to the substrate binding site. The residue at position 309 (threonine 309) is a Phosphothreonine. Lysine 318 is subject to N6-acetyllysine; alternate. N6-succinyllysine; alternate is present on lysine 318. The residue at position 322 (threonine 322) is a Phosphothreonine.

This sequence belongs to the LDH/MDH superfamily. LDH family. In terms of assembly, homotetramer. Interacts with PTEN upstream reading frame protein MP31. In terms of processing, ISGylated.

It is found in the cytoplasm. It carries out the reaction (S)-lactate + NAD(+) = pyruvate + NADH + H(+). It participates in fermentation; pyruvate fermentation to lactate; (S)-lactate from pyruvate: step 1/1. Its function is as follows. Interconverts simultaneously and stereospecifically pyruvate and lactate with concomitant interconversion of NADH and NAD(+). The chain is L-lactate dehydrogenase A chain (Ldha) from Mus musculus (Mouse).